The primary structure comprises 595 residues: DNA polymerase (595 aa).

Residues 1–212 form the 3'-5' exonuclease domain; it reads MIELRHEVQG…CKSLTPLVPD (212 aa). Positions 213-595 are polymerase; that stretch reads VSRSLVPYEH…SWGSLYGADY (383 aa).

The protein belongs to the DNA polymerase type-A family.

It carries out the reaction DNA(n) + a 2'-deoxyribonucleoside 5'-triphosphate = DNA(n+1) + diphosphate. Replicates viral genomic DNA. This polymerase possesses two enzymatic activities: DNA synthesis (polymerase) and an exonucleolytic activity that degrades single-stranded DNA in the 3'-5' direction. This is DNA polymerase (44) from Mycobacterium phage L5 (Mycobacteriophage L5).